The primary structure comprises 512 residues: Methionine--tRNA ligase (512 aa).

Positions Tyr-11–His-21 match the 'HIGH' region motif. Zn(2+)-binding residues include Cys-126, Cys-129, Cys-143, and His-147. A 'KMSKS' region motif is present at residues Lys-301–Ser-305. Lys-304 contacts ATP.

It belongs to the class-I aminoacyl-tRNA synthetase family. MetG type 2A subfamily. As to quaternary structure, monomer. Zn(2+) is required as a cofactor.

It is found in the cytoplasm. It carries out the reaction tRNA(Met) + L-methionine + ATP = L-methionyl-tRNA(Met) + AMP + diphosphate. Is required not only for elongation of protein synthesis but also for the initiation of all mRNA translation through initiator tRNA(fMet) aminoacylation. This Mycoplasma pneumoniae (strain ATCC 29342 / M129 / Subtype 1) (Mycoplasmoides pneumoniae) protein is Methionine--tRNA ligase (metG).